Consider the following 1382-residue polypeptide: Insulin receptor (1382 aa).

An N-terminal signal peptide occupies residues Met1 to Gly27. Extracellular segments follow at residues His28–Ser758 and Ser763–Lys956. Residues Cys35 and Cys53 are joined by a disulfide bond. N-linked (GlcNAc...) asparagine glycosylation is found at Asn43, Asn52, Asn105, and Asn138. Intrachain disulfides connect Cys153–Cys182, Cys186–Cys209, Cys196–Cys215, Cys219–Cys228, Cys223–Cys234, Cys235–Cys243, Cys239–Cys252, Cys255–Cys264, and Cys268–Cys280. Asn242 carries N-linked (GlcNAc...) asparagine glycosylation. Residue Asn282 is glycosylated (N-linked (GlcNAc...) asparagine). 5 disulfide bridges follow: Cys286–Cys311, Cys293–Cys301, Cys315–Cys328, Cys331–Cys335, and Cys339–Cys360. N-linked (GlcNAc...) asparagine glycosylation occurs at Asn322. Asn364 carries an N-linked (GlcNAc...) asparagine glycan. Residue Ser400 is modified to Phosphoserine. Tyr401 carries the post-translational modification Phosphotyrosine. Ser407 is subject to Phosphoserine. N-linked (GlcNAc...) asparagine glycans are attached at residues Asn424 and Asn445. Cysteines 462 and 495 form a disulfide. N-linked (GlcNAc...) asparagine glycosylation is found at Asn541, Asn633, Asn651, and Asn698. Positions Val624 to Ser726 constitute a Fibronectin type-III 1 domain. 2 disulfides stabilise this stretch: Cys674–Cys899 and Cys825–Cys834. A disordered region spans residues Ser686–Glu708. An insulin-binding region spans residues Glu733 to Phe741. Residues Thr746 to Asp766 form a disordered region. 2 consecutive Fibronectin type-III domains span residues Pro757 to Ala842 and Ile853 to Tyr947. N-linked (GlcNAc...) asparagine glycosylation is found at Asn769 and Asn782. Asn920 and Asn933 each carry an N-linked (GlcNAc...) asparagine glycan. The helical transmembrane segment at Ile957–Leu979 threads the bilayer. Residues Arg980–Ser1382 lie on the Cytoplasmic side of the membrane. A phosphotyrosine; by autocatalysis mark is found at Tyr992, Tyr999, and Tyr1011. Tyr999 is a region of interest (important for interaction with IRS1, SHC1 and STAT5B). In terms of domain architecture, Protein kinase spans Ile1023–Phe1298. Positions 1033 and 1057 each coordinate ATP. Residue Lys1079 forms a Glycyl lysine isopeptide (Lys-Gly) (interchain with G-Cter in ubiquitin) linkage. Cys1083 bears the S-nitrosocysteine mark. Glu1104 to Asp1110 provides a ligand contact to ATP. Asp1159 acts as the Proton donor/acceptor in catalysis. ATP-binding positions include Arg1163–Asn1164 and Asp1177. Residues Tyr1185, Tyr1189, Tyr1190, Tyr1355, and Tyr1361 each carry the phosphotyrosine; by autocatalysis modification. Residues Pro1360–Ser1382 form a disordered region. The segment at Tyr1361 to Met1364 is PIK3R1-binding.

Belongs to the protein kinase superfamily. Tyr protein kinase family. Insulin receptor subfamily. In terms of assembly, tetramer of 2 alpha and 2 beta chains linked by disulfide bonds. The alpha chains carry the insulin-binding regions, while the beta chains carry the kinase domain. Forms a hybrid receptor with IGF1R, the hybrid is a tetramer consisting of 1 alpha chain and 1 beta chain of INSR and 1 alpha chain and 1 beta chain of IGF1R. Interacts with SORBS1 but dissociates from it following insulin stimulation. Binds SH2B2. Activated form of INSR interacts (via Tyr-999) with the PTB/PID domains of IRS1 and SHC1. The sequences surrounding the phosphorylated NPXY motif contribute differentially to either IRS1 or SHC1 recognition. Interacts (via tyrosines in the C-terminus) with IRS2 (via PTB domain and 591-786 AA); the 591-786 would be the primary anchor of IRS2 to INSR while the PTB domain would have a stabilizing action on the interaction with INSR. Interacts with the SH2 domains of the 85 kDa regulatory subunit of PI3K (PIK3R1) in vitro, when autophosphorylated on tyrosine residues. Interacts with SOCS7. Interacts (via the phosphorylated Tyr-999), with SOCS3. Interacts (via the phosphorylated Tyr-1185, Tyr-1189, Tyr-1190) with SOCS1. Interacts with CAV2 (tyrosine-phosphorylated form); the interaction is increased with 'Tyr-27'phosphorylation of CAV2. Interacts with ARRB2. Interacts with GRB10; this interaction blocks the association between IRS1/IRS2 and INSR, significantly reduces insulin-stimulated tyrosine phosphorylation of IRS1 and IRS2 and thus decreases insulin signaling. Interacts with GRB7. Interacts with PDPK1. Interacts (via Tyr-1190) with GRB14 (via BPS domain); this interaction protects the tyrosines in the activation loop from dephosphorylation, but promotes dephosphorylation of Tyr-999, this results in decreased interaction with, and phosphorylation of, IRS1. Interacts (via subunit alpha) with ENPP1 (via 485-599 AA); this interaction blocks autophosphorylation. Interacts with PTPRE; this interaction is dependent of Tyr-1185, Tyr-1189 and Tyr-1190 of the INSR. Interacts with STAT5B (via SH2 domain). Interacts with PTPRF. Interacts with ATIC; ATIC together with PRKAA2/AMPK2 and HACD3/PTPLAD1 is proposed to be part of a signaling netwok regulating INSR autophosphorylation and endocytosis. Interacts with the cone snail venom insulin Con-Ins G1. Interacts with the insulin receptor SORL1; this interaction strongly increases its surface exposure, hence strengthens insulin signal reception. Interacts (tyrosine phosphorylated) with CCDC88A/GIV (via SH2-like region); binding requires autophosphorylation of the INSR C-terminal region. Interacts with GNAI3; the interaction is probably mediated by CCDC88A/GIV. Interacts with LMBRD1. Interacts (in response to insulin stimulation) with NCK1; this interaction may recruit PTPN1 to mediate INSR dephosphorylation. Interacts with CD248; this interaction diminishes INSR autophosphorylation. After being transported from the endoplasmic reticulum to the Golgi apparatus, the single glycosylated precursor is further glycosylated and then cleaved, followed by its transport to the plasma membrane. In terms of processing, autophosphorylated on tyrosine residues in response to insulin. Phosphorylation of Tyr-999 is required for binding to IRS1, SHC1 and STAT5B. Dephosphorylated by PTPRE at Tyr-999, Tyr-1185, Tyr-1189 and Tyr-1190. May also be phosphorylated at Tyr-1185 and Tyr-1190 by mTORC2. Dephosphorylated by PTPRF and PTPN1. Dephosphorylated by PTPN2; down-regulates insulin-induced signaling. Dephosphorylation at Tyr-1189 and Tyr-1190 requires the SH2/SH3 adapter protein NCK1, probably to recruit its interaction partner PTPN1. Post-translationally, S-nitrosylation at Cys-1083 by BLVRB inhibits the receptor tyrosine kinase, thereby inhibiting insulin signaling. Ubiquitinated by MARCHF1; leading to degradation thereby reducing surface INSR expression. In terms of tissue distribution, isoform Long and isoform Short are predominantly expressed in tissue targets of insulin metabolic effects: liver, adipose tissue and skeletal muscle but are also expressed in the peripheral nerve, kidney, pulmonary alveoli, pancreatic acini, placenta vascular endothelium, fibroblasts, monocytes, granulocytes, erythrocytes and skin. Isoform Short is preferentially expressed in fetal cells such as fetal fibroblasts, muscle, liver and kidney. Found as a hybrid receptor with IGF1R in muscle, heart, kidney, adipose tissue, skeletal muscle, hepatoma, fibroblasts, spleen and placenta (at protein level). Overexpressed in several tumors, including breast, colon, lung, ovary, and thyroid carcinomas.

The protein localises to the cell membrane. Its subcellular location is the late endosome. It localises to the lysosome. It catalyses the reaction L-tyrosyl-[protein] + ATP = O-phospho-L-tyrosyl-[protein] + ADP + H(+). With respect to regulation, activated in response to insulin. Autophosphorylation activates the kinase activity. PTPN1, PTPRE and PTPRF dephosphorylate important tyrosine residues, thereby reducing INSR activity. Inhibited by ENPP1. GRB10 and GRB14 inhibit the catalytic activity of the INSR, they block access of substrates to the activated receptor. SOCS1 and SOCS3 act as negative regulators of INSR activity, they bind to the activated INRS and interfere with the phosphorylation of INSR substrates. In terms of biological role, receptor tyrosine kinase which mediates the pleiotropic actions of insulin. Binding of insulin leads to phosphorylation of several intracellular substrates, including, insulin receptor substrates (IRS1, 2, 3, 4), SHC, GAB1, CBL and other signaling intermediates. Each of these phosphorylated proteins serve as docking proteins for other signaling proteins that contain Src-homology-2 domains (SH2 domain) that specifically recognize different phosphotyrosine residues, including the p85 regulatory subunit of PI3K and SHP2. Phosphorylation of IRSs proteins lead to the activation of two main signaling pathways: the PI3K-AKT/PKB pathway, which is responsible for most of the metabolic actions of insulin, and the Ras-MAPK pathway, which regulates expression of some genes and cooperates with the PI3K pathway to control cell growth and differentiation. Binding of the SH2 domains of PI3K to phosphotyrosines on IRS1 leads to the activation of PI3K and the generation of phosphatidylinositol-(3, 4, 5)-triphosphate (PIP3), a lipid second messenger, which activates several PIP3-dependent serine/threonine kinases, such as PDPK1 and subsequently AKT/PKB. The net effect of this pathway is to produce a translocation of the glucose transporter SLC2A4/GLUT4 from cytoplasmic vesicles to the cell membrane to facilitate glucose transport. Moreover, upon insulin stimulation, activated AKT/PKB is responsible for: anti-apoptotic effect of insulin by inducing phosphorylation of BAD; regulates the expression of gluconeogenic and lipogenic enzymes by controlling the activity of the winged helix or forkhead (FOX) class of transcription factors. Another pathway regulated by PI3K-AKT/PKB activation is mTORC1 signaling pathway which regulates cell growth and metabolism and integrates signals from insulin. AKT mediates insulin-stimulated protein synthesis by phosphorylating TSC2 thereby activating mTORC1 pathway. The Ras/RAF/MAP2K/MAPK pathway is mainly involved in mediating cell growth, survival and cellular differentiation of insulin. Phosphorylated IRS1 recruits GRB2/SOS complex, which triggers the activation of the Ras/RAF/MAP2K/MAPK pathway. In addition to binding insulin, the insulin receptor can bind insulin-like growth factors (IGFI and IGFII). Isoform Short has a higher affinity for IGFII binding. When present in a hybrid receptor with IGF1R, binds IGF1. PubMed:12138094 shows that hybrid receptors composed of IGF1R and INSR isoform Long are activated with a high affinity by IGF1, with low affinity by IGF2 and not significantly activated by insulin, and that hybrid receptors composed of IGF1R and INSR isoform Short are activated by IGF1, IGF2 and insulin. In contrast, PubMed:16831875 shows that hybrid receptors composed of IGF1R and INSR isoform Long and hybrid receptors composed of IGF1R and INSR isoform Short have similar binding characteristics, both bind IGF1 and have a low affinity for insulin. In adipocytes, inhibits lipolysis. The chain is Insulin receptor (INSR) from Homo sapiens (Human).